Here is a 470-residue protein sequence, read N- to C-terminus: Calcitonin gene-related peptide type 1 receptor (470 aa).

The first 23 residues, 1–23, serve as a signal peptide directing secretion; the sequence is MTASCWTICLFLLGSVTEFIVLA. Over 24 to 147 the chain is Extracellular; the sequence is SPEVNESQQQ…HTTEGRRTAM (124 aa). Residues N28, N74, N126, and N131 are each glycosylated (N-linked (GlcNAc...) asparagine). Disulfide bonds link C56-C82, C73-C113, and C96-C135. The helical transmembrane segment at 148 to 172 threads the bilayer; it reads NLFYLALIGHGLSLTSLFISLGIFF. At 173–183 the chain is on the cytoplasmic side; it reads HFKSLSCQRIT. Residues 184–206 traverse the membrane as a helical segment; sequence LHKNLFFSFVLNSIITIIWLTAV. At 207-217 the chain is on the extracellular side; the sequence is ANNQELVQQNP. A helical transmembrane segment spans residues 218-246; it reads ISCKISQFIHLYIFGCNYFWMLCEGIYLH. Residues 247–260 lie on the Cytoplasmic side of the membrane; that stretch reads TLIVVAVFAEKQHL. A helical membrane pass occupies residues 261-281; it reads MWYYLLGWGFPLIPATIHAVA. The Extracellular segment spans residues 282 to 297; sequence RSYYYNDNCWISSNTS. Residue N295 is glycosylated (N-linked (GlcNAc...) asparagine). Residues 298 to 322 form a helical membrane-spanning segment; sequence LLYIIHGPICAAMLVNLFFLLNIVR. The Cytoplasmic portion of the chain corresponds to 323 to 337; the sequence is VLITKLKVTHQAKSS. Residues 338-359 traverse the membrane as a helical segment; the sequence is LYMKAVRATLILVPLLGIQYVL. At 360–374 the chain is on the extracellular side; sequence LPYKPSGRVSAEIYD. Residues 375-395 form a helical membrane-spanning segment; that stretch reads YIMHILMHYQGLLVATIFCFF. Over 396-470 the chain is Cytoplasmic; sequence NGEVQAVLRR…AIIKPENPFA (75 aa).

The protein belongs to the G-protein coupled receptor 2 family.

It is found in the cell membrane. Its function is as follows. May function as G protein-coupled receptor for calcitonin-gene-related peptides and adrenomedullin. Specificity may be modulated by accessory proteins. May activate cAMP-dependent pathway. The polypeptide is Calcitonin gene-related peptide type 1 receptor (calcrla) (Danio rerio (Zebrafish)).